A 561-amino-acid chain; its full sequence is Endoplasmic reticulum oxidoreductin-1 (561 aa).

Residues 1–18 form the signal peptide; the sequence is MVKVLQLCFLSAISLVQA. N-linked (GlcNAc...) asparagine glycans are attached at residues Asn20 and Asn39. Cystine bridges form between Cys95/Cys349, Cys105/Cys110, Cys145/Cys166, Cys152/Cys295, and Cys352/Cys355. N-linked (GlcNAc...) asparagine glycosylation is present at Asn135. Residues Arg187, Thr189, Trp200, Ser228, His231, and Arg260 each contribute to the FAD site. An N-linked (GlcNAc...) asparagine glycan is attached at Asn342. The Nucleophile role is filled by Cys352. Cys355 is a catalytic residue. The N-linked (GlcNAc...) asparagine glycan is linked to Asn452.

It belongs to the EROs family. In terms of assembly, may function both as a monomer and a homodimer. FAD serves as cofactor.

The protein localises to the endoplasmic reticulum membrane. In terms of biological role, essential oxidoreductase that oxidizes proteins in the endoplasmic reticulum to produce disulfide bonds. Acts by oxidizing directly PDI1 isomerase through a direct disulfide exchange. Does not act as a direct oxidant of folding substrate, but relies on PDI1 to transfer oxidizing equivalent. Does not oxidize all pdi related proteins, suggesting that it can discriminate between PDI1 and related proteins. Its reoxidation probably involves electron transfer to molecular oxygen via FAD. Acts independently of glutathione. May be responsible for a significant proportion of reactive oxygen species (ROS) in the cell, thereby being a source of oxidative stress. The sequence is that of Endoplasmic reticulum oxidoreductin-1 (ERO1) from Kluyveromyces lactis (strain ATCC 8585 / CBS 2359 / DSM 70799 / NBRC 1267 / NRRL Y-1140 / WM37) (Yeast).